The primary structure comprises 7388 residues: Microtubule-actin cross-linking factor 1, isoforms 1/2/3/4/5 (7388 aa).

The disordered stretch occupies residues 1 to 47 (MSSSDEETLSERSCRSERSCRSERSYRSERSGSLSPCPPGDTLPWNL). Positions 1-295 (MSSSDEETLS…VITYVSSIYD (295 aa)) are actin-binding. Phosphoserine is present on Ser4. Over residues 9–30 (LSERSCRSERSCRSERSYRSER) the composition is skewed to basic and acidic residues. Phosphoserine occurs at positions 35 and 57. Calponin-homology (CH) domains lie at 78–181 (RVQK…LHFQ) and 194–298 (MSAK…DAFP). 2 LRR repeats span residues 148-171 (QRQV…LTLG) and 240-264 (LVDM…VAER). Ser280 is subject to Phosphoserine. LRR repeat units lie at residues 377–399 (LYKL…YHPN) and 441–464 (LNCE…LESG). Ser814 bears the Phosphoserine mark. Residues 868–925 (KNTISVKAVCDYRQIEITICKNDECVLEDNSQRTKWKVISPTGNEAMVPSVCFLIPPP) form the SH3 domain. Residues 1050–1073 (ISELKNIRLRLEEYEQRVVKRIQS) form an LRR 5 repeat. The residue at position 1122 (Ser1122) is a Phosphoserine. 3 LRR repeats span residues 1128–1154 (VPTL…VYLN), 1187–1210 (LADL…VKDK), and 1257–1282 (HRVI…DYRA). 2 positions are modified to phosphoserine: Ser1367 and Ser1376. 5 Plectin repeats span residues 1577-1621 (LVLL…RELQ), 1654-1696 (LKIL…VLES), 1769-1809 (RLLE…CAIL), 1811-1848 (RQLQ…VILE), and 1855-1886 (GLLW…KILS). 2 positions are modified to phosphoserine: Ser2006 and Ser2051. Positions 2051–2085 (SQNKEYPDREDCTTEKGKKTTVETEDSSVENPEQD) are disordered. Basic and acidic residues predominate over residues 2055–2072 (EYPDREDCTTEKGKKTTV). Phosphoserine is present on Ser2077. Plectin repeat units follow at residues 2290-2332 (LNVL…KLME), 2367-2410 (NVLM…LERQ), 2411-2437 (VVTG…GLVD), 2501-2543 (RLLT…LKRV), 2581-2612 (EVQA…LTNE), and 2686-2730 (LKVL…ASHQ). Disordered stretches follow at residues 3013 to 3034 (EHDS…GKEA) and 3104 to 3174 (SEPF…NECK). Residues 3115-3124 (EGLHYQESDG) show a composition bias toward basic and acidic residues. A Phosphoserine modification is found at Ser3122. Residues 3129–3158 (TGPSQISKTDKSFQGTTRQETNYQDSWVTS) are compositionally biased toward polar residues. LRR repeat units follow at residues 3239–3262 (LTGE…SIED) and 3264–3283 (VTQR…LFKG). Residues 3321 to 3332 (EKTPQEKLRESP) are compositionally biased toward basic and acidic residues. Residues 3321–3350 (EKTPQEKLRESPGSEQTPFMTAPEGKGNGG) form a disordered region. Ser3331 carries the post-translational modification Phosphoserine. 2 LRR repeats span residues 3646 to 3669 (QQDL…IQNR) and 3696 to 3720 (LTAL…TRVA). 2 Spectrin repeats span residues 3883 to 3957 (ELQK…NSFK) and 4000 to 4108 (QYHQ…SLLQ). Ser3927 bears the Phosphoserine mark. Residues 3936–3958 (KGDLRFVTISGQKVLDMENSFKE) form an LRR 13 repeat. LRR repeat units lie at residues 4125–4150 (LQSI…VIQE) and 4261–4287 (IQEL…ELSS). One copy of the Spectrin 3 repeat lies at 4466–4574 (RMEEVHKEAN…TVARQRQLEE (109 aa)). Residues Ser4495, Ser4496, and Ser4521 each carry the phosphoserine modification. LRR repeat units lie at residues 4511 to 4534 (KAFL…LAGL), 4601 to 4624 (GVLG…QFML), and 4769 to 4792 (KKRL…RINR). Spectrin repeat units lie at residues 4800-4904 (TQQF…SRLK) and 4909-5012 (KAQK…SLEE). A phosphoserine mark is found at Ser4836 and Ser4962. 3 LRR repeats span residues 5051 to 5076 (NKNL…YLRN), 5172 to 5194 (NKIH…MLEE), and 5281 to 5304 (KEQV…LIQS). Spectrin repeat units lie at residues 5236-5341 (EDFY…QLQE), 5348-5450 (KFQD…QLED), and 5455-5557 (AKQF…LRTL). Thr5435 is modified (phosphothreonine). The interval 5583–5603 (EELATSGGQSPTGEQIPQFQQ) is disordered. A compositionally biased stretch (polar residues) spans 5588-5603 (SGGQSPTGEQIPQFQQ). LRR repeat units lie at residues 5695–5719 (MALG…AFSI) and 5804–5828 (AQLP…QLRE). Spectrin repeat units lie at residues 5783 to 5885 (NQFW…ALDE), 6005 to 6110 (LAEK…KLED), 6115 to 6219 (AVQY…HKLE), 6225 to 6328 (LGQF…QQLQ), 6333 to 6439 (QAQG…KLEE), 6443 to 6547 (LATE…RSLD), 6552 to 6658 (RAKQ…KLEE), 6665 to 6766 (QFMD…RLEQ), and 6771 to 6874 (AEVF…QRLE). Phosphoserine is present on residues Ser5808 and Ser6032. Lys6210 is subject to N6-acetyllysine. Residues 6496–6519 (RDQIIELDQTGNQLKFLSQKQDVV) form an LRR 24 repeat. The disordered stretch occupies residues 6951–6981 (PTHAPFIEKSRSGGRKSLSQPTPPPMPILSQ). Position 6967 is a phosphoserine (Ser6967). 2 EF-hand domains span residues 7041-7076 (HKKS…SKFP) and 7077-7112 (TTKL…NKDA). Ca(2+)-binding residues include Asp7054, Asp7056, Asp7058, Lys7060, Glu7065, Asp7090, Asp7092, Asp7094, Tyr7096, and Glu7101. The GAR domain occupies 7117–7189 (TDADKIEDEV…EFLVKNDPCR (73 aa)). Positions 7117 to 7388 (TDADKIEDEV…ASPRTPGPKR (272 aa)) are C-terminal tail. A disordered region spans residues 7205–7388 (PEGASQGMTP…ASPRTPGPKR (184 aa)). Positions 7225–7259 (SSRAASPTRSSSSASQSNHSCTSMPSSPATPASGT) are enriched in low complexity. Phosphothreonine is present on Thr7254. Residues 7275–7299 (TFHSSRTSLAGDTSNSSSPASTGAK) show a composition bias toward polar residues. Ser7279 and Ser7292 each carry phosphoserine. Positions 7310 to 7324 (SRPGSRAGSRAGSRA) are enriched in low complexity. The 4 X 4 AA tandem repeats of [GS]-S-R-[AR] stretch occupies residues 7313–7328 (GSRAGSRAGSRASSRR). Ser7330 and Ser7333 each carry phosphoserine. The segment covering 7339–7361 (ETQSACSDTSESSAAGGQGNSRR) has biased composition (polar residues).

The protein belongs to the plakin or cytolinker family. As to quaternary structure, isoform 2: Interacts with MAPRE1, CLASP1, CLASP2, AXIN1 and LRP6. Isoform 2: Found in a complex composed of MACF1, APC, AXIN1, CTNNB1 and GSK3B. Isoform 2: Interacts with GOLGA4. Isoform 2: Interacts with CAMSAP3. Phosphorylated on serine residues in the C-terminal tail by GSK3B. Phosphorylation inhibits microtubule-binding and this plays a critical role in bulge stem cell migration and skin wound repair. Wnt-signaling can repress phosphorylation. In terms of tissue distribution, isoform 2: Ubiquitously expressed. Isoform 1: Expressed in cell lines NCI-H460, A-549 and HaCaT. Isoform 4: Expressed in heart, lung, pituitary and placenta, not found in brain, kidney, liver, pancreas or skeletal muscle.

Its subcellular location is the cytoplasm. The protein resides in the cytoskeleton. It localises to the golgi apparatus. The protein localises to the cell membrane. It is found in the cell projection. Its subcellular location is the ruffle membrane. Its function is as follows. F-actin-binding protein which plays a role in cross-linking actin to other cytoskeletal proteins and also binds to microtubules. Plays an important role in ERBB2-dependent stabilization of microtubules at the cell cortex. Acts as a positive regulator of Wnt receptor signaling pathway and is involved in the translocation of AXIN1 and its associated complex (composed of APC, CTNNB1 and GSK3B) from the cytoplasm to the cell membrane. Has actin-regulated ATPase activity and is essential for controlling focal adhesions (FAs) assembly and dynamics. Interaction with CAMSAP3 at the minus ends of non-centrosomal microtubules tethers microtubules minus-ends to actin filaments, regulating focal adhesion size and cell migration. May play role in delivery of transport vesicles containing GPI-linked proteins from the trans-Golgi network through its interaction with GOLGA4. Plays a key role in wound healing and epidermal cell migration. Required for efficient upward migration of bulge cells in response to wounding and this function is primarily rooted in its ability to coordinate microtubule dynamics and polarize hair follicle stem cells. As a regulator of actin and microtubule arrangement and stabilization, it plays an essential role in neurite outgrowth, branching and spine formation during brain development. This is Microtubule-actin cross-linking factor 1, isoforms 1/2/3/4/5 from Homo sapiens (Human).